Consider the following 123-residue polypeptide: Ribosome-binding factor A (123 aa).

The protein belongs to the RbfA family. Monomer. Binds 30S ribosomal subunits, but not 50S ribosomal subunits or 70S ribosomes.

It is found in the cytoplasm. One of several proteins that assist in the late maturation steps of the functional core of the 30S ribosomal subunit. Associates with free 30S ribosomal subunits (but not with 30S subunits that are part of 70S ribosomes or polysomes). Required for efficient processing of 16S rRNA. May interact with the 5'-terminal helix region of 16S rRNA. In Chlorobium chlorochromatii (strain CaD3), this protein is Ribosome-binding factor A.